We begin with the raw amino-acid sequence, 392 residues long: tRNA (guanine-N(7)-)-methyltransferase (392 aa).

E123, E148, and D175 together coordinate S-adenosyl-L-methionine. Positions 201 and 231 each coordinate substrate.

The protein belongs to the class I-like SAM-binding methyltransferase superfamily. TrmB family.

It catalyses the reaction guanosine(46) in tRNA + S-adenosyl-L-methionine = N(7)-methylguanosine(46) in tRNA + S-adenosyl-L-homocysteine. It functions in the pathway tRNA modification; N(7)-methylguanine-tRNA biosynthesis. Catalyzes the formation of N(7)-methylguanine at position 46 (m7G46) in tRNA. The sequence is that of tRNA (guanine-N(7)-)-methyltransferase from Campylobacter jejuni subsp. jejuni serotype O:2 (strain ATCC 700819 / NCTC 11168).